Consider the following 428-residue polypeptide: Probable protein phosphatase 2C 12 (428 aa).

Positions 24–293 (KIDNPELIHG…DDTTCIVVDI (270 aa)) constitute a PPM-type phosphatase domain. Mn(2+) contacts are provided by Asp69, Gly70, Asp245, and Asp284. The tract at residues 301–331 (ASVPPPKKQGKGMLKSMFKRKTSDSSSNIEK) is disordered.

The protein belongs to the PP2C family. The cofactor is Mg(2+). Mn(2+) is required as a cofactor.

The enzyme catalyses O-phospho-L-seryl-[protein] + H2O = L-seryl-[protein] + phosphate. It catalyses the reaction O-phospho-L-threonyl-[protein] + H2O = L-threonyl-[protein] + phosphate. The polypeptide is Probable protein phosphatase 2C 12 (Arabidopsis thaliana (Mouse-ear cress)).